The sequence spans 1153 residues: Cytosolic carboxypeptidase 1 (1153 aa).

A disordered region spans residues 357-400; that stretch reads NQPPGVDDVVDESDENEATEVDTENDTENEEDDTGHKTQNDDIE. The segment covering 364 to 389 has biased composition (acidic residues); sequence DVVDESDENEATEVDTENDTENEEDD. The region spanning 774-1063 is the Peptidase M14 domain; it reads YPYTYSMLKM…QFCLALLRLR (290 aa). H845, E848, and H942 together coordinate Zn(2+). E1027 acts as the Proton donor/acceptor in catalysis. Over residues 1108–1128 the composition is skewed to acidic residues; sequence AFLEEVDYSAESNDENDPELE. A disordered region spans residues 1108–1153; it reads AFLEEVDYSAESNDENDPELEPDLRDNHALPDPSSDSELSHQDSLT. Residues 1141–1153 show a composition bias toward polar residues; that stretch reads SSDSELSHQDSLT.

Belongs to the peptidase M14 family. It depends on Zn(2+) as a cofactor.

It localises to the cytoplasm. Its subcellular location is the cytosol. The protein localises to the nucleus. It is found in the mitochondrion. It carries out the reaction (L-glutamyl)(n+1)-gamma-L-glutamyl-L-glutamyl-[protein] + H2O = (L-glutamyl)(n)-gamma-L-glutamyl-L-glutamyl-[protein] + L-glutamate. The catalysed reaction is C-terminal L-alpha-aminoacyl-L-glutamyl-L-glutamyl-[tubulin] + H2O = C-terminal L-alpha-aminoacyl-L-glutamyl-[tubulin] + L-glutamate. Metallocarboxypeptidase that mediates protein deglutamylation of tubulin and non-tubulin target proteins. Catalyzes the removal of polyglutamate side chains present on the gamma-carboxyl group of glutamate residues within the C-terminal tail of alpha- and beta-tubulin. Specifically cleaves tubulin long-side-chains, while it is not able to remove the branching point glutamate. Also catalyzes the removal of polyglutamate residues from the carboxy-terminus of alpha-tubulin as well as non-tubulin proteins. This is Cytosolic carboxypeptidase 1 (agtpbp1) from Danio rerio (Zebrafish).